A 261-amino-acid polypeptide reads, in one-letter code: Histone H1-I (261 aa).

Positions 1–22 are enriched in low complexity; sequence MSETEAAPVVAPAAEAAPAAEA. Disordered regions lie at residues 1 to 63 and 125 to 261; these read MSET…PPYI and FKLS…KGKK. Residues 41–50 are compositionally biased toward basic and acidic residues; sequence APKEPKAPKE. Residues 58-129 enclose the H15 domain; it reads THPPYIEMVK…KVKGSFKLSE (72 aa). The span at 133 to 142 shows a compositional bias: basic residues; that stretch reads AKAKKSTPKK. 2 repeat units span residues 136–140 and 188–192. The interval 136-250 is 7 X 5 AA repeats of K-K-[AS]-T-P; sequence KKSTPKKAKA…KKAPAKKSTP (115 aa). Residues 139 to 142 mediate DNA binding; the sequence is TPKK. Over residues 143 to 198 the composition is skewed to basic and acidic residues; that stretch reads AKADGEAKPKKSEAKPKKAEAVKKTKAPKEKVERPKKEKKEKVEKKKATPKAEKPK. A 3; approximate repeat occupies 199 to 203; the sequence is KAATP. 4 consecutive repeat copies span residues 209-213, 230-234, 236-240, and 246-250. Over residues 227-250 the composition is skewed to basic residues; sequence AKPKKATPSKKAAPKKAPAKKSTP. The segment covering 251-261 has biased composition (basic and acidic residues); that stretch reads KAKEAKSKGKK.

Belongs to the histone H1/H5 family.

It is found in the nucleus. It localises to the chromosome. In terms of biological role, histones H1 are necessary for the condensation of nucleosome chains into higher-order structures. The protein is Histone H1-I (H1-I) of Volvox carteri (Green alga).